The sequence spans 564 residues: Keratin, type II cytoskeletal 6C (564 aa).

Residues Met1–His11 show a composition bias toward low complexity. The interval Met1–Ala23 is disordered. Ala2 carries the N-acetylalanine modification. The interval Ala2 to Glu162 is head. Ser60 is subject to Phosphoserine. Residues Glu163 to Leu198 are coil 1A. Residues Glu163–Leu476 form the IF rod domain. Residues Gln199 to Tyr217 are linker 1. The coil 1B stretch occupies residues Ile218–Met309. The segment at Gln310–Ile333 is linker 12. The segment at Ile334–Glu472 is coil 2. The segment at Glu473–His564 is tail.

Belongs to the intermediate filament family. Heterodimer of a type I and a type II keratin. KRT6 isomers associate with KRT16 and/or KRT17. As to expression, constitutively expressed in distinct types of epithelia such as those in oral mucosa, esophagus, papillae of tongue and hair follicle outer root sheath.

The protein is Keratin, type II cytoskeletal 6C (KRT6C) of Homo sapiens (Human).